The following is a 667-amino-acid chain: Leucine-rich repeat-containing protein 43 (667 aa).

Positions 1-11 (METSESSTSDY) are enriched in polar residues. The segment at 1-24 (METSESSTSDYRQTEGEGEGVPGT) is disordered. LRR repeat units follow at residues 148–169 (KLEELVLSANKIEEIDANNLPP), 170–191 (TLKVLELYGNLIASMECLCSAP), 194–213 (RLQHLGLGHNKLLGPLESLY), and 221–242 (QLVSLDLGFNNLTDLQNMILGL). The LRRCT domain maps to 256 to 294 (NPLSLVPYYRGFTIDSLAHLCVLDDITVSPNEKHQFRGL). Disordered stretches follow at residues 374-407 (FSGTDEEDQQEDPLDGRHRHRGRQRFHPGSTEEM), 533-570 (ESPLPAKKGKDNNKKKEPAKDKVHKKKKEPPRELRQDP), and 616-640 (SKKVKKSLKKDRSKTVPPTMESGYQ). Residues 377-386 (TDEEDQQEDP) show a composition bias toward acidic residues. The segment covering 390–399 (RHRHRGRQRF) has biased composition (basic residues). Residues 540–553 (KGKDNNKKKEPAKD) show a composition bias toward basic and acidic residues. The segment covering 617–627 (KKVKKSLKKDR) has biased composition (basic residues).

The protein is Leucine-rich repeat-containing protein 43 (Lrrc43) of Mus musculus (Mouse).